A 227-amino-acid polypeptide reads, in one-letter code: Cytidylate kinase (227 aa).

10 to 18 (GPASSGKST) serves as a coordination point for ATP.

This sequence belongs to the cytidylate kinase family. Type 1 subfamily.

The protein resides in the cytoplasm. It carries out the reaction CMP + ATP = CDP + ADP. It catalyses the reaction dCMP + ATP = dCDP + ADP. In Streptococcus agalactiae serotype V (strain ATCC BAA-611 / 2603 V/R), this protein is Cytidylate kinase.